The chain runs to 360 residues: Thiol protease SEN102 (360 aa).

An N-terminal signal peptide occupies residues 1-20 (MAKPKFIALALVALSFLSIA). Positions 21–133 (QSIPFTEKDL…ENVGSLPAAS (113 aa)) are cleaved as a propeptide — activation peptide. 3 disulfides stabilise this stretch: C151–C193, C185–C225, and C283–C335. C154 is a catalytic residue. Active-site residues include H289 and N310. Residue N353 is glycosylated (N-linked (GlcNAc...) asparagine). Positions 357–360 (RDEL) match the Prevents secretion from ER motif.

It belongs to the peptidase C1 family.

It localises to the endoplasmic reticulum lumen. This is Thiol protease SEN102 (SEN102) from Hemerocallis sp. (Daylily).